The sequence spans 969 residues: GATOR2 complex protein Wdr59 (969 aa).

The segment at 1 to 24 is disordered; the sequence is MPPTETLRPGERGTAGGPGAGAPE. WD repeat units lie at residues 127–167, 172–211, 215–255, 258–303, and 307–351; these read GHTR…KPAL, VCMS…CPTH, AHLN…RAEK, TTMS…DPIC, and GHTD…LKLC. Phosphothreonine is present on threonine 373. An RWD domain is found at 435 to 538; sequence HEFSLLNTNM…RALVAAMKKK (104 aa). The C4-type zinc-finger motif lies at 891–911; that stretch reads ECRKCAKPKRTPKCEPCKRPV. Residues cysteine 892, cysteine 895, cysteine 904, cysteine 907, cysteine 917, cysteine 928, histidine 933, histidine 936, histidine 939, cysteine 950, cysteine 953, cysteine 955, and cysteine 957 each contribute to the Zn(2+) site. Residues 912 to 960 form an RING-type; atypical zinc finger; that stretch reads LFCVLCRLPVKGAANACLACGHGGHIDHMMQWFEKHNVCATCGCKCLER.

It belongs to the WD repeat WDR59 family. In terms of assembly, component of the GATOR complex consisting of mio, Nup44A/Seh1, Im11, Nplr3, Nplr2, Wdr24, Wdr59 and Sec13. Within the GATOR complex, probable component of the GATOR2 subcomplex which is likely composed of mio, Nup44A/Seh1, Wdr24, Wdr59 and Sec13. The GATOR2 complex associates with unmet in the absence of S-adenosyl-L-methionine; the mio-Wdr24-Nup44A subcomplex is essential and sufficient for this interaction while Wdr59 and Sec13 are dispensable. This association acts as a nutrient sensor to inhibit mTORC1 signaling in the absence of methionine.

The protein resides in the lysosome membrane. Its function is as follows. A component of the GATOR complex, which functions as a regulator of the amino acid-sensing branch of the mTORC1 signaling pathway. The two GATOR subcomplexes, GATOR1 and GATOR2, regulate the mTORC1 pathway in order to mediate metabolic homeostasis, female gametogenesis and the response to amino acid limitation and complete starvation. GATOR2 activates the mTORC1 signaling pathway through the inhibition of the GATOR1 subcomplex, controlling the switch to cell proliferation and growth under nutrient replete conditions and during female oocyte development. Acts as an atypical component of the GATOR2 subcomplex, which can either promote or inhibit mTORC1 signaling, depending on tissues: inhibits mTORC1 activity by preventing the activity of GATOR2 in the ovary and the eye imaginal disk brain, while it promotes mTORC1 activity in the fat body. This is GATOR2 complex protein Wdr59 from Drosophila melanogaster (Fruit fly).